A 472-amino-acid polypeptide reads, in one-letter code: MFEVVIGLEVHTQLNTKTKIFCSCATSFGEAPNTNVCPTCLALPGALPVLNEEAVKKAIAFGKAVNATINKKSVFNRKNYFYPDLPKAYQISQFDIPIVEKGELFINVKGENKRIGITRAHLEEDAGKNIHENNFSKVDLNRAGTPLLEIVSEPELRSSDEAVAYLKKLHSIIRFLDISDANMQEGSFRCDANVSIRPKGDTKLYTRVEIKNLNSFRFIQKAIEYEVKRQSEAWEDGTYEQEVVQETRLFDTTNLVTRSMRGKEEAAEYRYFPDPDLLPVLLKDEFLDIKIPELPDEKKARFIDELGIKESDAEVLISSLEMSRFFESLISQNLNPKLCVNWLNTELMGLLKGELTIENSPVDAQKLGILIKRIEDGTISAKAAKDVLAFVFENTSVEIDEAIEKLGLKQVSDDSAIEAVIEQILNANADKVAEYKSGKEKLFGFFVGQTMKEGKGAFNPAKVNEILKTKLG.

Belongs to the GatB/GatE family. GatB subfamily. Heterotrimer of A, B and C subunits.

The catalysed reaction is L-glutamyl-tRNA(Gln) + L-glutamine + ATP + H2O = L-glutaminyl-tRNA(Gln) + L-glutamate + ADP + phosphate + H(+). The enzyme catalyses L-aspartyl-tRNA(Asn) + L-glutamine + ATP + H2O = L-asparaginyl-tRNA(Asn) + L-glutamate + ADP + phosphate + 2 H(+). Its function is as follows. Allows the formation of correctly charged Asn-tRNA(Asn) or Gln-tRNA(Gln) through the transamidation of misacylated Asp-tRNA(Asn) or Glu-tRNA(Gln) in organisms which lack either or both of asparaginyl-tRNA or glutaminyl-tRNA synthetases. The reaction takes place in the presence of glutamine and ATP through an activated phospho-Asp-tRNA(Asn) or phospho-Glu-tRNA(Gln). This Campylobacter jejuni (strain RM1221) protein is Aspartyl/glutamyl-tRNA(Asn/Gln) amidotransferase subunit B.